The primary structure comprises 386 residues: Methionine import ATP-binding protein MetN 2 (386 aa).

The ABC transporter domain occupies 32-272; it reads VIFDDVGKVF…PQHDATRALL (241 aa). 69 to 76 contributes to the ATP binding site; that stretch reads GRSGAGKS.

Belongs to the ABC transporter superfamily. Methionine importer (TC 3.A.1.24) family. In terms of assembly, the complex is composed of two ATP-binding proteins (MetN), two transmembrane proteins (MetI) and a solute-binding protein (MetQ).

The protein localises to the cell inner membrane. It carries out the reaction L-methionine(out) + ATP + H2O = L-methionine(in) + ADP + phosphate + H(+). The enzyme catalyses D-methionine(out) + ATP + H2O = D-methionine(in) + ADP + phosphate + H(+). Part of the ABC transporter complex MetNIQ involved in methionine import. Responsible for energy coupling to the transport system. The polypeptide is Methionine import ATP-binding protein MetN 2 (Paraburkholderia xenovorans (strain LB400)).